We begin with the raw amino-acid sequence, 124 residues long: Ribonuclease pancreatic (124 aa).

Positions Lys-1–Ile-13 are enriched in basic and acidic residues. A disordered region spans residues Lys-1–Asn-24. The substrate site is built by Lys-7 and Arg-10. His-12 acts as the Proton acceptor in catalysis. A compositionally biased stretch (low complexity) spans Ser-15–Asn-24. 4 cysteine pairs are disulfide-bonded: Cys-26-Cys-84, Cys-40-Cys-95, Cys-58-Cys-110, and Cys-65-Cys-72. N-linked (GlcNAc...) asparagine; partial glycosylation occurs at Asn-34. Substrate contacts are provided by residues Lys-41–Thr-45, Lys-66, and Arg-85. His-119 serves as the catalytic Proton donor.

Belongs to the pancreatic ribonuclease family. In terms of assembly, monomer. Interacts with and forms tight 1:1 complexes with RNH1. Dimerization of two such complexes may occur. Interaction with RNH1 inhibits this protein. In terms of tissue distribution, pancreas.

It is found in the secreted. It catalyses the reaction an [RNA] containing cytidine + H2O = an [RNA]-3'-cytidine-3'-phosphate + a 5'-hydroxy-ribonucleotide-3'-[RNA].. The enzyme catalyses an [RNA] containing uridine + H2O = an [RNA]-3'-uridine-3'-phosphate + a 5'-hydroxy-ribonucleotide-3'-[RNA].. In terms of biological role, endonuclease that catalyzes the cleavage of RNA on the 3' side of pyrimidine nucleotides. Acts on single-stranded and double-stranded RNA. This is Ribonuclease pancreatic (RNASE1) from Antilocapra americana (Pronghorn).